Reading from the N-terminus, the 360-residue chain is NAD(P)H-quinone oxidoreductase subunit 1, chloroplastic (360 aa).

9 consecutive transmembrane segments (helical) span residues I27–I47, F98–F118, I129–G149, A165–L185, F203–L223, Y248–S268, L269–L289, I297–I317, and F340–L360.

It belongs to the complex I subunit 1 family. As to quaternary structure, NDH is composed of at least 16 different subunits, 5 of which are encoded in the nucleus.

It is found in the plastid. It localises to the chloroplast thylakoid membrane. It carries out the reaction a plastoquinone + NADH + (n+1) H(+)(in) = a plastoquinol + NAD(+) + n H(+)(out). The enzyme catalyses a plastoquinone + NADPH + (n+1) H(+)(in) = a plastoquinol + NADP(+) + n H(+)(out). Its function is as follows. NDH shuttles electrons from NAD(P)H:plastoquinone, via FMN and iron-sulfur (Fe-S) centers, to quinones in the photosynthetic chain and possibly in a chloroplast respiratory chain. The immediate electron acceptor for the enzyme in this species is believed to be plastoquinone. Couples the redox reaction to proton translocation, and thus conserves the redox energy in a proton gradient. In Nasturtium officinale (Watercress), this protein is NAD(P)H-quinone oxidoreductase subunit 1, chloroplastic.